Consider the following 515-residue polypeptide: Lysine--tRNA ligase (515 aa).

Mg(2+)-binding residues include Glu425 and Glu432.

Belongs to the class-II aminoacyl-tRNA synthetase family. Homodimer. Mg(2+) serves as cofactor.

Its subcellular location is the cytoplasm. The enzyme catalyses tRNA(Lys) + L-lysine + ATP = L-lysyl-tRNA(Lys) + AMP + diphosphate. The protein is Lysine--tRNA ligase of Cupriavidus metallidurans (strain ATCC 43123 / DSM 2839 / NBRC 102507 / CH34) (Ralstonia metallidurans).